The sequence spans 323 residues: Mediator of RNA polymerase II transcription subunit 4 (323 aa).

Residues 1-36 (MLPFKKADSPFKSNPVSRVGSSTRLNQLGNIKSNPT) form a disordered region. Residues 11–36 (FKSNPVSRVGSSTRLNQLGNIKSNPT) show a composition bias toward polar residues. A coiled-coil region spans residues 79 to 167 (MVQKVNEYER…VSYRNELKKL (89 aa)). 2 stretches are compositionally biased toward basic and acidic residues: residues 241–262 (HELG…KVDH) and 282–303 (DEQR…KEEQ). A disordered region spans residues 241–323 (HELGETDKEN…LFDPDDEYSD (83 aa)).

Belongs to the Mediator complex subunit 4 family. In terms of assembly, component of the Mediator complex.

The protein localises to the nucleus. Component of the Mediator complex, a coactivator involved in the regulated transcription of nearly all RNA polymerase II-dependent genes. Mediator functions as a bridge to convey information from gene-specific regulatory proteins to the basal RNA polymerase II transcription machinery. Mediator is recruited to promoters by direct interactions with regulatory proteins and serves as a scaffold for the assembly of a functional preinitiation complex with RNA polymerase II and the general transcription factors. The polypeptide is Mediator of RNA polymerase II transcription subunit 4 (MED4) (Candida albicans (strain SC5314 / ATCC MYA-2876) (Yeast)).